The following is a 207-amino-acid chain: Dephospho-CoA kinase (207 aa).

Residues 12–207 (LIGITGMIGG…LYSTLLGKML (196 aa)) enclose the DPCK domain. ATP is bound at residue 20–25 (GGGKST).

This sequence belongs to the CoaE family.

It is found in the cytoplasm. It carries out the reaction 3'-dephospho-CoA + ATP = ADP + CoA + H(+). The protein operates within cofactor biosynthesis; coenzyme A biosynthesis; CoA from (R)-pantothenate: step 5/5. Catalyzes the phosphorylation of the 3'-hydroxyl group of dephosphocoenzyme A to form coenzyme A. This Leptospira interrogans serogroup Icterohaemorrhagiae serovar copenhageni (strain Fiocruz L1-130) protein is Dephospho-CoA kinase.